We begin with the raw amino-acid sequence, 249 residues long: Acetate transporter protein patA (249 aa).

6 consecutive transmembrane segments (helical) span residues 42 to 62 (IGSP…TLSM), 71 to 91 (AITN…LVLV), 106 to 126 (VFGG…PAFG), 141 to 161 (AIGY…VAAM), 169 to 189 (GMLG…FSFA), and 202 to 222 (AAGA…GHLM).

Belongs to the acetate uptake transporter (AceTr) (TC 2.A.96) family.

Its subcellular location is the endoplasmic reticulum membrane. It participates in mycotoxin biosynthesis; patulin biosynthesis. Its function is as follows. Acetate transporter protein; part of the gene cluster that mediates the biosynthesis of patulin, an acetate-derived tetraketide mycotoxin produced by several fungal species that shows antimicrobial properties against several bacteria. May be involved in the uptake of acetate, a substrate for the synthesis of 6-methylsalicylic acid by the polyketide synthase patK. The protein is Acetate transporter protein patA of Penicillium expansum (Blue mold rot fungus).